Consider the following 108-residue polypeptide: uncharacterized protein (108 aa).

The protein belongs to the UPF0440 family.

This is an uncharacterized protein from Thermococcus kodakarensis (strain ATCC BAA-918 / JCM 12380 / KOD1) (Pyrococcus kodakaraensis (strain KOD1)).